Here is a 494-residue protein sequence, read N- to C-terminus: MDSFSLLAALFFISAATWFISSRRRRNLPPGPFPYPIVGNMLQLGAQPHETFAKLSKKYGPLMSVHLGSLYTVIVSSPEMAKEIMLKYGTVFSGRTVAQAVHACDHDKISMGFLPIGAEWRDMRKICKEQMFSHQSMEDSQGLRKQKLQQLLDHAHRCSEQGRAIDIREAAFITTLNLMSATLFSMQATEFDSKVTMEFKEIIEGVASIVGVPNFADYFPILRPFDPQGVKRRADVYFGRLLALIEGYLNDRIQSRKANPDAPKKDDFLETLVDILNSNDNKLKTDHLLHLMLDLFVGGSETSTTEIEWIMEELVAHPDKMAKVKAELKSVMGDEKVVDESLMPRLPYLQAVVKESMRLHPPGPLLLPRKAESDQVVNGYLIPKGTQVLINAWAMGRDSTIWNNPDAFQPERFLDNKIDFKGQDYELIPFGSGRRVCPGMPLANRMLHTVTATLVHNFDWKLERPDAPLAEHQGVLFGFAVRRAVPLRIVPYKA.

The chain crosses the membrane as a helical span at residues 3 to 23; sequence SFSLLAALFFISAATWFISSR. C437 provides a ligand contact to heme.

Belongs to the cytochrome P450 family. It depends on heme as a cofactor. As to expression, expressed in roots.

It localises to the membrane. It carries out the reaction ferruginol + 2 reduced [NADPH--hemoprotein reductase] + 2 O2 = sugiol + 2 oxidized [NADPH--hemoprotein reductase] + 3 H2O + 2 H(+). The enzyme catalyses ferruginol + reduced [NADPH--hemoprotein reductase] + O2 = 11-hydroxyferruginol + oxidized [NADPH--hemoprotein reductase] + H2O + H(+). The catalysed reaction is 11-hydroxyferruginol + 2 reduced [NADPH--hemoprotein reductase] + 2 O2 = 11-hydroxysugiol + 2 oxidized [NADPH--hemoprotein reductase] + 3 H2O + 2 H(+). It participates in secondary metabolite biosynthesis; terpenoid biosynthesis. Monooxygenase that oxidizes ferruginol to produce sugiol. Oxidizes ferruginol at C-12 to produce 11-hydroxyferruginol. Can oxidize 11-hydroxyferruginol to 11-hydroxysugiol. These products are intermediates in tanshinone biosynthesis. The chain is Sugiol synthase from Salvia miltiorrhiza (Chinese sage).